A 418-amino-acid chain; its full sequence is FXa-directed anticoagulant (418 aa).

The signal sequence occupies residues 1–19 (MNLKIAIIVICQLVYFTQG). N-linked (GlcNAc...) asparagine glycosylation is found at asparagine 117, asparagine 167, and asparagine 286.

Belongs to the serpin family. Interacts with host coagulation factor X/F10 (activated). In terms of tissue distribution, female salivary gland (at protein level).

The protein resides in the secreted. Functionally, anticoagulant and antithrombotic serpin-type protein inhibiting host coagulation factor Xa (F10). Does not inhibit host uPA/urokinase-type plasminogen activator (PLAU), kallikrein, granzyme B (GZMB), matriptase, elastase, alpha-chymotrypsin, chymase, coagulation factor XIIa (F12), coagulation factor XIa (F11), plasmin (PLG), thrombin (F2), trypsin and cathepsin G (CTSG). Inhibits factor Xa-induced production of pro-inflammatory cytokines, such as MCP-1/CCL2, TNF-alpha/TNF, IL-1beta/IL1B, IL6, IL8/CXCL8 and IL18, in human endothelial cells. Inhibits factor Xa-induced up-regulation of protease-activated receptors (PARs) F2R, F2RL1 and F2RL2 in human endothelial cells. Prevents activation of host F2RL1 via inhibition of F2RL1 cleavage by host factor Xa. Inhibits factor Xa-induced up-regulation of adhesion molecules ICAM1 and VCAM1 in human endothelial cells. Inhibits factor Xa-induced up-regulation of phosphorylated ERK1/2 in human endothelial cells. Inhibits factor Xa-induced activation of transcription factor NF-kappa-B in human endothelial cells. Reduces factor Xa-induced edema in the host. Reduces factor Xa-induced endothelial permeability in the host. This chain is FXa-directed anticoagulant, found in Aedes albopictus (Asian tiger mosquito).